The chain runs to 199 residues: Chaperone protein TorD (199 aa).

It belongs to the TorD/DmsD family. TorD subfamily.

The protein localises to the cytoplasm. Involved in the biogenesis of TorA. Acts on TorA before the insertion of the molybdenum cofactor and, as a result, probably favors a conformation of the apoenzyme that is competent for acquiring the cofactor. This is Chaperone protein TorD from Escherichia coli O7:K1 (strain IAI39 / ExPEC).